The following is a 399-amino-acid chain: Elongation factor Tu (399 aa).

A tr-type G domain is found at 10–209 (NPHVNIGTIG…EVDSYIPTPE (200 aa)). Residues 19-26 (GHVYHGKT) form a G1 region. Residue 19–26 (GHVYHGKT) coordinates GTP. T26 is a binding site for Mg(2+). The interval 60-64 (GITIA) is G2. The interval 81–84 (DCPG) is G3. GTP contacts are provided by residues 81-85 (DCPGH) and 136-139 (NKQD). The G4 stretch occupies residues 136–139 (NKQD). The G5 stretch occupies residues 174-176 (SAL).

This sequence belongs to the TRAFAC class translation factor GTPase superfamily. Classic translation factor GTPase family. EF-Tu/EF-1A subfamily. In terms of assembly, monomer.

Its subcellular location is the cytoplasm. The catalysed reaction is GTP + H2O = GDP + phosphate + H(+). Its function is as follows. GTP hydrolase that promotes the GTP-dependent binding of aminoacyl-tRNA to the A-site of ribosomes during protein biosynthesis. This chain is Elongation factor Tu, found in Helicobacter pylori (strain J99 / ATCC 700824) (Campylobacter pylori J99).